We begin with the raw amino-acid sequence, 463 residues long: Quinolone resistance protein NorB (463 aa).

The next 14 membrane-spanning stretches (helical) occupy residues Ile17–Val37, Ile53–Ala73, Ile86–Ile106, Ile107–Ile127, Tyr142–Ala162, Leu165–Ile185, Phe201–Thr221, Ser230–Leu250, Thr273–Val293, Tyr299–Ile319, Pro334–Leu354, Ile357–Tyr377, Met403–Val423, and Ile435–Val455.

It belongs to the major facilitator superfamily. TCR/Tet family.

It localises to the cell membrane. Multidrug efflux pump that acts independently of NorA and is one of the factors that confers resistance against diverse quinolones and chemical compounds. This Staphylococcus aureus (strain MRSA252) protein is Quinolone resistance protein NorB (norB).